Reading from the N-terminus, the 232-residue chain is Ornithine carbamoyltransferase (232 aa).

Carbamoyl phosphate contacts are provided by residues Gln15, Arg39, and 66-69; that span reads HPTQ. L-ornithine contacts are provided by residues Asn99, Asp163, and 167-168; that span reads SM. Carbamoyl phosphate-binding positions include 204–207 and Thr232; that span reads HCLP.

The protein belongs to the aspartate/ornithine carbamoyltransferase superfamily. OTCase family.

It is found in the cytoplasm. The enzyme catalyses carbamoyl phosphate + L-ornithine = L-citrulline + phosphate + H(+). Its pathway is amino-acid biosynthesis; L-arginine biosynthesis; L-arginine from L-ornithine and carbamoyl phosphate: step 1/3. Reversibly catalyzes the transfer of the carbamoyl group from carbamoyl phosphate (CP) to the N(epsilon) atom of ornithine (ORN) to produce L-citrulline. The protein is Ornithine carbamoyltransferase (argF) of Neisseria pharyngis.